Reading from the N-terminus, the 158-residue chain is NAD(P)H-quinone oxidoreductase subunit J, chloroplastic (158 aa).

It belongs to the complex I 30 kDa subunit family. As to quaternary structure, NDH is composed of at least 16 different subunits, 5 of which are encoded in the nucleus.

The protein resides in the plastid. It is found in the chloroplast thylakoid membrane. It carries out the reaction a plastoquinone + NADH + (n+1) H(+)(in) = a plastoquinol + NAD(+) + n H(+)(out). The catalysed reaction is a plastoquinone + NADPH + (n+1) H(+)(in) = a plastoquinol + NADP(+) + n H(+)(out). In terms of biological role, NDH shuttles electrons from NAD(P)H:plastoquinone, via FMN and iron-sulfur (Fe-S) centers, to quinones in the photosynthetic chain and possibly in a chloroplast respiratory chain. The immediate electron acceptor for the enzyme in this species is believed to be plastoquinone. Couples the redox reaction to proton translocation, and thus conserves the redox energy in a proton gradient. This is NAD(P)H-quinone oxidoreductase subunit J, chloroplastic from Buxus microphylla (Littleleaf boxwood).